A 451-amino-acid polypeptide reads, in one-letter code: Phosphoglucosamine mutase (451 aa).

The active-site Phosphoserine intermediate is the Ser107. The Mg(2+) site is built by Ser107, Asp246, Asp248, and Asp250. Ser107 carries the phosphoserine modification.

Belongs to the phosphohexose mutase family. Mg(2+) is required as a cofactor. In terms of processing, activated by phosphorylation.

It catalyses the reaction alpha-D-glucosamine 1-phosphate = D-glucosamine 6-phosphate. Functionally, catalyzes the conversion of glucosamine-6-phosphate to glucosamine-1-phosphate. The chain is Phosphoglucosamine mutase from Burkholderia cenocepacia (strain HI2424).